Consider the following 130-residue polypeptide: Small ribosomal subunit protein uS9 (130 aa).

Belongs to the universal ribosomal protein uS9 family.

The sequence is that of Small ribosomal subunit protein uS9 from Hamiltonella defensa subsp. Acyrthosiphon pisum (strain 5AT).